Consider the following 282-residue polypeptide: NADPH-dependent 7-cyano-7-deazaguanine reductase (282 aa).

Residue 88–90 (IES) coordinates substrate. Residue 90 to 91 (SK) participates in NADPH binding. The Thioimide intermediate role is filled by cysteine 190. Aspartate 197 serves as the catalytic Proton donor. 229–230 (HE) contacts substrate. 258–259 (RG) contributes to the NADPH binding site.

It belongs to the GTP cyclohydrolase I family. QueF type 2 subfamily. Homodimer.

It localises to the cytoplasm. It carries out the reaction 7-aminomethyl-7-carbaguanine + 2 NADP(+) = 7-cyano-7-deazaguanine + 2 NADPH + 3 H(+). It functions in the pathway tRNA modification; tRNA-queuosine biosynthesis. Catalyzes the NADPH-dependent reduction of 7-cyano-7-deazaguanine (preQ0) to 7-aminomethyl-7-deazaguanine (preQ1). This is NADPH-dependent 7-cyano-7-deazaguanine reductase from Escherichia coli (strain SMS-3-5 / SECEC).